A 437-amino-acid polypeptide reads, in one-letter code: MSKRLSPQLQHNITEDAYCETHLEPTRLFCDVDQITLCSKCFQSQEHKHHMVCGIQEAAENYRKLFQEILNTSREKLEAAKSILTDEQERMAMIQEEEQNFKKMIESEYSMRLRLLNEECEQNLQRQQECISDLNLRETLLNQAIKLATELEEMFQEMLQRLGRVGRENMEKLKESEARASEQVRSLLKLIVELEKKCGEGTLALLKNAKYSLERSKSLLLEHLEPAHITDLSLCHIRGLSSMFRVLQRHLTLDPETAHPCLALSEDLRTMRLRHGQQDGAGNPERLDFSAMVLAAESFTSGRHYWEVDVEKATRWQVGIYHGSADAKGSTARASGEKVLLTGSVMGTEWTLWVFPPLKRLFLEKKLDTVGVFLDCEHGQISFYNVTEMSLIYNFSHCAFQGALRPVFSLCIPNGDTSPDSLTILQHGPSCDATVSP.

Residues 14 to 55 form a B box-type zinc finger; the sequence is TEDAYCETHLEPTRLFCDVDQITLCSKCFQSQEHKHHMVCGI. Zn(2+)-binding residues include cysteine 19, histidine 22, cysteine 41, and histidine 47. A coiled-coil region spans residues 55–200; that stretch reads IQEAAENYRK…IVELEKKCGE (146 aa). Positions 231–429 constitute a B30.2/SPRY domain; it reads DLSLCHIRGL…DSLTILQHGP (199 aa).

It carries out the reaction S-ubiquitinyl-[E2 ubiquitin-conjugating enzyme]-L-cysteine + [acceptor protein]-L-lysine = [E2 ubiquitin-conjugating enzyme]-L-cysteine + N(6)-ubiquitinyl-[acceptor protein]-L-lysine.. It functions in the pathway protein modification; protein ubiquitination. The sequence is that of Probable E3 ubiquitin-protein ligase TRIML2 from Homo sapiens (Human).